Reading from the N-terminus, the 874-residue chain is UPF0182 protein Sfum_2137 (874 aa).

The next 7 helical transmembrane spans lie at 7 to 27, 57 to 77, 110 to 130, 171 to 191, 208 to 228, 252 to 272, and 283 to 303; these read WPLIILIGILGISAVVILSSL, IVFGAVTLLFFLIFFLNFWVA, SLWVYTPLSLILAVIIALPIF, RRLLIAFVLLLVGLVALYLLE, LHLSILILLIFLIETWDYVLQ, VIWALIWLTLFFLMGTAFSMI, and PLVVFAVGFVLVLGLRYSAFL.

The protein belongs to the UPF0182 family.

It is found in the cell membrane. This is UPF0182 protein Sfum_2137 from Syntrophobacter fumaroxidans (strain DSM 10017 / MPOB).